We begin with the raw amino-acid sequence, 289 residues long: Phosphatidylglycerol--prolipoprotein diacylglyceryl transferase (289 aa).

A run of 4 helical transmembrane segments spans residues 21–41 (IGPL…LLGI), 53–73 (IDPN…IPAA), 95–115 (IWHG…ALIL), and 122–142 (IPIW…QAIG). A 1,2-diacyl-sn-glycero-3-phospho-(1'-sn-glycerol) is bound at residue arginine 143. The next 3 membrane-spanning stretches (helical) occupy residues 182–202 (PTFL…IWLF), 215–235 (GVMT…IEGL), and 247–267 (IAQM…VWIY).

The protein belongs to the Lgt family.

It localises to the cell inner membrane. The enzyme catalyses L-cysteinyl-[prolipoprotein] + a 1,2-diacyl-sn-glycero-3-phospho-(1'-sn-glycerol) = an S-1,2-diacyl-sn-glyceryl-L-cysteinyl-[prolipoprotein] + sn-glycerol 1-phosphate + H(+). Its pathway is protein modification; lipoprotein biosynthesis (diacylglyceryl transfer). In terms of biological role, catalyzes the transfer of the diacylglyceryl group from phosphatidylglycerol to the sulfhydryl group of the N-terminal cysteine of a prolipoprotein, the first step in the formation of mature lipoproteins. The protein is Phosphatidylglycerol--prolipoprotein diacylglyceryl transferase of Synechococcus elongatus (strain ATCC 33912 / PCC 7942 / FACHB-805) (Anacystis nidulans R2).